The following is a 546-amino-acid chain: CTP synthase (546 aa).

An amidoligase domain region spans residues 1–265 (MTKYVFVTGG…DEIVCHKLNI (265 aa)). S13 lines the CTP pocket. UTP is bound at residue S13. Residues 14 to 19 (SLGKGI) and D71 each bind ATP. The Mg(2+) site is built by D71 and E139. CTP-binding positions include 146-148 (DIE), 186-191 (KTKPTQ), and K222. Residues 186 to 191 (KTKPTQ) and K222 contribute to the UTP site. Residues 290 to 543 (KIAFVGKYVD…VKAALANQKA (254 aa)) form the Glutamine amidotransferase type-1 domain. G351 serves as a coordination point for L-glutamine. C378 functions as the Nucleophile; for glutamine hydrolysis in the catalytic mechanism. Residues 379–382 (LGMQ), E402, and R469 each bind L-glutamine. Active-site residues include H516 and E518.

This sequence belongs to the CTP synthase family. As to quaternary structure, homotetramer.

It catalyses the reaction UTP + L-glutamine + ATP + H2O = CTP + L-glutamate + ADP + phosphate + 2 H(+). The catalysed reaction is L-glutamine + H2O = L-glutamate + NH4(+). The enzyme catalyses UTP + NH4(+) + ATP = CTP + ADP + phosphate + 2 H(+). The protein operates within pyrimidine metabolism; CTP biosynthesis via de novo pathway; CTP from UDP: step 2/2. Its activity is regulated as follows. Allosterically activated by GTP, when glutamine is the substrate; GTP has no effect on the reaction when ammonia is the substrate. The allosteric effector GTP functions by stabilizing the protein conformation that binds the tetrahedral intermediate(s) formed during glutamine hydrolysis. Inhibited by the product CTP, via allosteric rather than competitive inhibition. Catalyzes the ATP-dependent amination of UTP to CTP with either L-glutamine or ammonia as the source of nitrogen. Regulates intracellular CTP levels through interactions with the four ribonucleotide triphosphates. In Dechloromonas aromatica (strain RCB), this protein is CTP synthase.